We begin with the raw amino-acid sequence, 363 residues long: 5-formaminoimidazole-4-carboxamide-1-(beta)-D-ribofuranosyl 5'-monophosphate synthetase (363 aa).

Residues H29 and S96 each coordinate 5-amino-1-(5-phospho-beta-D-ribosyl)imidazole-4-carboxamide. Residues R118–K354 enclose the ATP-grasp domain. ATP contacts are provided by residues P148 to C210 and E232. Position 260 (N260) interacts with 5-amino-1-(5-phospho-beta-D-ribosyl)imidazole-4-carboxamide. Residues Q299 and E312 each coordinate Mg(2+).

This sequence belongs to the phosphohexose mutase family. Mg(2+) serves as cofactor. The cofactor is Mn(2+).

The catalysed reaction is 5-amino-1-(5-phospho-beta-D-ribosyl)imidazole-4-carboxamide + formate + ATP = 5-formamido-1-(5-phospho-D-ribosyl)imidazole-4-carboxamide + ADP + phosphate. It functions in the pathway purine metabolism; IMP biosynthesis via de novo pathway; 5-formamido-1-(5-phospho-D-ribosyl)imidazole-4-carboxamide from 5-amino-1-(5-phospho-D-ribosyl)imidazole-4-carboxamide (formate route): step 1/1. Catalyzes the ATP- and formate-dependent formylation of 5-aminoimidazole-4-carboxamide-1-beta-d-ribofuranosyl 5'-monophosphate (AICAR) to 5-formaminoimidazole-4-carboxamide-1-beta-d-ribofuranosyl 5'-monophosphate (FAICAR) in the absence of folates. The protein is 5-formaminoimidazole-4-carboxamide-1-(beta)-D-ribofuranosyl 5'-monophosphate synthetase of Methanobrevibacter smithii (strain ATCC 35061 / DSM 861 / OCM 144 / PS).